A 101-amino-acid polypeptide reads, in one-letter code: Iron-sulfur cluster assembly protein CyaY (101 aa).

The protein belongs to the frataxin family.

In terms of biological role, involved in iron-sulfur (Fe-S) cluster assembly. May act as a regulator of Fe-S biogenesis. This chain is Iron-sulfur cluster assembly protein CyaY, found in Haemophilus influenzae (strain PittEE).